Reading from the N-terminus, the 350-residue chain is GTPase Obg (350 aa).

Residues 1-158 form the Obg domain; sequence MFIDSVKITL…RLVRLELKLI (158 aa). One can recognise an OBG-type G domain in the interval 159-339; that stretch reads ADVGLVGFPN…LKFMLLEEIK (181 aa). GTP-binding positions include 165-172, 190-194, 212-215, 280-283, and 320-322; these read GFPNVGKS, FTTLT, DIPG, SKSD, and SSL. The Mg(2+) site is built by S172 and T192.

Belongs to the TRAFAC class OBG-HflX-like GTPase superfamily. OBG GTPase family. As to quaternary structure, monomer. Mg(2+) is required as a cofactor.

The protein localises to the cytoplasm. Its function is as follows. An essential GTPase which binds GTP, GDP and possibly (p)ppGpp with moderate affinity, with high nucleotide exchange rates and a fairly low GTP hydrolysis rate. Plays a role in control of the cell cycle, stress response, ribosome biogenesis and in those bacteria that undergo differentiation, in morphogenesis control. The chain is GTPase Obg from Campylobacter jejuni (strain RM1221).